The sequence spans 260 residues: Membrane protein insertase YidC 1 (260 aa).

The first 22 residues, 1–22, serve as a signal peptide directing secretion; that stretch reads MLKSYRAVLVSLSLLLVFVLSG. The N-palmitoyl cysteine moiety is linked to residue Cys-23. Residue Cys-23 is the site of S-diacylglycerol cysteine attachment. 5 helical membrane passes run 29 to 49, 52 to 72, 133 to 153, 164 to 184, and 213 to 233; these read IDAHSTGIWDHYFVYPISFMI, VAHHIPGASFGIAIIIMTLVI, LAGCWPLLIQMPIFSALYYAI, FLWVNLGHADPYHILPIIAAL, and MPAMILFMGFAAPSGLVLYWI.

It belongs to the OXA1/ALB3/YidC family. Type 2 subfamily.

It localises to the cell membrane. Required for the insertion and/or proper folding and/or complex formation of integral membrane proteins into the membrane. Involved in integration of membrane proteins that insert both dependently and independently of the Sec translocase complex, as well as at least some lipoproteins. The protein is Membrane protein insertase YidC 1 of Bacillus anthracis.